The sequence spans 368 residues: Leu/Ile/Val-binding protein homolog 3 (368 aa).

An N-terminal signal peptide occupies residues M1–A23.

This sequence belongs to the leucine-binding protein family.

Functionally, component of an amino-acid transport system. This chain is Leu/Ile/Val-binding protein homolog 3, found in Brucella melitensis biotype 1 (strain ATCC 23456 / CCUG 17765 / NCTC 10094 / 16M).